A 290-amino-acid polypeptide reads, in one-letter code: Probable aquaporin PIP2-1 (290 aa).

Transmembrane regions (helical) follow at residues 43 to 63 and 80 to 100; these read AVIAEFIATLLFLYITVATVI and CGGVGVLGIAWAFGGMIFILV. Residues 112 to 114 carry the NPA 1 motif; it reads NPA. The next 3 helical transmembrane spans lie at 131 to 151, 173 to 193, and 207 to 227; these read ILYIVAQCLGAICGVGLVKAF, GTGLAAEIIGTFVLVYTVFSA, and VLAPLPIGFAVFMVHLATIPI. The short motif at 233-235 is the NPA 2 element; sequence NPA. The helical transmembrane segment at 255–275 threads the bilayer; it reads IFWVGPFVGAAIAAFYHQYIL.

This sequence belongs to the MIP/aquaporin (TC 1.A.8) family. PIP (TC 1.A.8.11) subfamily. In terms of tissue distribution, expressed in roots, leaves and anthers.

It is found in the cell membrane. Aquaporins facilitate the transport of water and small neutral solutes across cell membranes. The chain is Probable aquaporin PIP2-1 (PIP2-1) from Oryza sativa subsp. japonica (Rice).